We begin with the raw amino-acid sequence, 341 residues long: ATP-dependent 6-phosphofructokinase 2 (341 aa).

Residues G10, 72–73 (RL), and 102–105 (GEGT) contribute to the ATP site. Residue E103 coordinates Mg(2+). Substrate is bound by residues 125–127 (TID), R162, 169–171 (MGR), E222, K266, and 272–275 (HVQR). Residue D127 is the Proton acceptor of the active site.

Belongs to the phosphofructokinase type A (PFKA) family. Mixed-substrate PFK group III subfamily. As to quaternary structure, homodimer or homotetramer. Requires Mg(2+) as cofactor.

It localises to the cytoplasm. The enzyme catalyses beta-D-fructose 6-phosphate + ATP = beta-D-fructose 1,6-bisphosphate + ADP + H(+). It participates in carbohydrate degradation; glycolysis; D-glyceraldehyde 3-phosphate and glycerone phosphate from D-glucose: step 3/4. Allosterically inhibited by phosphoenolpyruvate. Its function is as follows. Catalyzes the phosphorylation of D-fructose 6-phosphate to fructose 1,6-bisphosphate by ATP, the first committing step of glycolysis. In Streptomyces coelicolor (strain ATCC BAA-471 / A3(2) / M145), this protein is ATP-dependent 6-phosphofructokinase 2.